The chain runs to 128 residues: Aspartate 1-decarboxylase (128 aa).

Ser25 functions as the Schiff-base intermediate with substrate; via pyruvic acid in the catalytic mechanism. Pyruvic acid (Ser) is present on Ser25. Thr57 contacts substrate. Tyr58 serves as the catalytic Proton donor. 73–75 (GAA) lines the substrate pocket.

This sequence belongs to the PanD family. Heterooctamer of four alpha and four beta subunits. The cofactor is pyruvate. In terms of processing, is synthesized initially as an inactive proenzyme, which is activated by self-cleavage at a specific serine bond to produce a beta-subunit with a hydroxyl group at its C-terminus and an alpha-subunit with a pyruvoyl group at its N-terminus.

Its subcellular location is the cytoplasm. The enzyme catalyses L-aspartate + H(+) = beta-alanine + CO2. Its pathway is cofactor biosynthesis; (R)-pantothenate biosynthesis; beta-alanine from L-aspartate: step 1/1. Catalyzes the pyruvoyl-dependent decarboxylation of aspartate to produce beta-alanine. This is Aspartate 1-decarboxylase from Moorella thermoacetica (strain ATCC 39073 / JCM 9320).